Consider the following 142-residue polypeptide: Large ribosomal subunit protein uL13 (142 aa).

Belongs to the universal ribosomal protein uL13 family. As to quaternary structure, part of the 50S ribosomal subunit.

In terms of biological role, this protein is one of the early assembly proteins of the 50S ribosomal subunit, although it is not seen to bind rRNA by itself. It is important during the early stages of 50S assembly. This chain is Large ribosomal subunit protein uL13, found in Leptothrix cholodnii (strain ATCC 51168 / LMG 8142 / SP-6) (Leptothrix discophora (strain SP-6)).